The sequence spans 248 residues: Transmembrane protein 223 (248 aa).

3 consecutive transmembrane segments (helical) span residues 46–68 (IFRPLVFPVRVASAFTFTSAAVA), 84–104 (LLAIFCGGQFLFWAYLGHFAF), and 140–160 (YGFTSGCLIIGGGILALALLF).

The protein belongs to the TMEM223 family.

Its subcellular location is the mitochondrion inner membrane. Mitochondrial ribosome-associated protein involved in the first steps of cytochrome c oxidase complex (complex IV) biogenesis. Stimulates the translation of MT-CO1 mRNA and is a constituent of early MT-CO1 assembly intermediates. This chain is Transmembrane protein 223, found in Danio rerio (Zebrafish).